A 356-amino-acid polypeptide reads, in one-letter code: UDP-N-acetylglucosamine--N-acetylmuramyl-(pentapeptide) pyrophosphoryl-undecaprenol N-acetylglucosamine transferase (356 aa).

UDP-N-acetyl-alpha-D-glucosamine-binding positions include 12-14 (TGG), Asn124, Arg163, Ser188, Ile242, and Gln287.

It belongs to the glycosyltransferase 28 family. MurG subfamily.

Its subcellular location is the cell inner membrane. The enzyme catalyses di-trans,octa-cis-undecaprenyl diphospho-N-acetyl-alpha-D-muramoyl-L-alanyl-D-glutamyl-meso-2,6-diaminopimeloyl-D-alanyl-D-alanine + UDP-N-acetyl-alpha-D-glucosamine = di-trans,octa-cis-undecaprenyl diphospho-[N-acetyl-alpha-D-glucosaminyl-(1-&gt;4)]-N-acetyl-alpha-D-muramoyl-L-alanyl-D-glutamyl-meso-2,6-diaminopimeloyl-D-alanyl-D-alanine + UDP + H(+). The protein operates within cell wall biogenesis; peptidoglycan biosynthesis. In terms of biological role, cell wall formation. Catalyzes the transfer of a GlcNAc subunit on undecaprenyl-pyrophosphoryl-MurNAc-pentapeptide (lipid intermediate I) to form undecaprenyl-pyrophosphoryl-MurNAc-(pentapeptide)GlcNAc (lipid intermediate II). The chain is UDP-N-acetylglucosamine--N-acetylmuramyl-(pentapeptide) pyrophosphoryl-undecaprenol N-acetylglucosamine transferase from Pseudomonas syringae pv. tomato (strain ATCC BAA-871 / DC3000).